Consider the following 142-residue polypeptide: Large ribosomal subunit protein uL11 (142 aa).

Belongs to the universal ribosomal protein uL11 family. In terms of assembly, part of the ribosomal stalk of the 50S ribosomal subunit. Interacts with L10 and the large rRNA to form the base of the stalk. L10 forms an elongated spine to which L12 dimers bind in a sequential fashion forming a multimeric L10(L12)X complex. In terms of processing, one or more lysine residues are methylated.

Its function is as follows. Forms part of the ribosomal stalk which helps the ribosome interact with GTP-bound translation factors. In Gamma-proteobacterium EBAC31A08, this protein is Large ribosomal subunit protein uL11.